Consider the following 148-residue polypeptide: Snaclec B9 (148 aa).

Residues 1-24 (MGRFIFVSFGLLVVFLSLSGTGAA) form the signal peptide. 3 cysteine pairs are disulfide-bonded: Cys-27–Cys-38, Cys-55–Cys-144, and Cys-121–Cys-136. The C-type lectin domain maps to 34–145 (YDQHCYKVFD…CRLLGHFVCK (112 aa)). Asn-57 and Asn-60 each carry an N-linked (GlcNAc...) asparagine glycan.

The protein belongs to the snaclec family. In terms of assembly, heterodimer; disulfide-linked. In terms of tissue distribution, expressed by the venom gland.

It is found in the secreted. Functionally, interferes with one step of hemostasis (modulation of platelet aggregation, or coagulation cascade, for example). The sequence is that of Snaclec B9 from Macrovipera lebetinus (Levantine viper).